The following is a 61-amino-acid chain: Small ribosomal subunit protein uS14B (61 aa).

Cysteine 24, cysteine 27, cysteine 40, and cysteine 43 together coordinate Zn(2+).

This sequence belongs to the universal ribosomal protein uS14 family. Zinc-binding uS14 subfamily. Part of the 30S ribosomal subunit. Contacts proteins S3 and S10. Requires Zn(2+) as cofactor.

In terms of biological role, binds 16S rRNA, required for the assembly of 30S particles and may also be responsible for determining the conformation of the 16S rRNA at the A site. The sequence is that of Small ribosomal subunit protein uS14B from Saccharopolyspora erythraea (strain ATCC 11635 / DSM 40517 / JCM 4748 / NBRC 13426 / NCIMB 8594 / NRRL 2338).